A 354-amino-acid polypeptide reads, in one-letter code: L-Lys-D/L-Arg epimerase (354 aa).

Substrate is bound by residues Thr-135 and 160–162; that span reads KIK. Positions 190, 215, and 240 each coordinate Mg(2+). Substrate-binding positions include Lys-265, Asp-295, and 318-320; that span reads DLD.

This sequence belongs to the mandelate racemase/muconate lactonizing enzyme family. Mg(2+) serves as cofactor.

Catalyzes the epimerization of L-Lys-L-Arg to L-Lys-D-Arg (in vitro). Catalyzes the epimerization of positively charged dipeptides, with a preference for substrates with a basic amino acid in the second position. Has epimerase activity with L-Lys-L-Lys, L-Arg-L-Arg, L-Val-L-Arg, L-Val-L-Lys and L-Ala-L-Arg (in vitro). The protein is L-Lys-D/L-Arg epimerase of Desulforapulum autotrophicum (strain ATCC 43914 / DSM 3382 / VKM B-1955 / HRM2) (Desulfobacterium autotrophicum).